The chain runs to 276 residues: 3' cyclic ADP-D-ribose synthase HopAM1 (276 aa).

Residues Val-20–Ser-38 show a composition bias toward polar residues. Residues Val-20–Lys-39 are disordered. Positions Lys-165–Asp-214 are TIR domain. Residue Gln-190 is part of the active site.

As to quaternary structure, homodimer.

It localises to the host cytoplasm. Its subcellular location is the host cytosol. The enzyme catalyses NAD(+) = 3'cADPR + nicotinamide + H(+). Its function is as follows. NAD(+) hydrolase (NADase) that cleaves NAD(+) into nicotinamide and 3' cyclic ADP-D-ribose (3'cADPR, v2-cADPR). Upon infiltration of A.thaliana with this bacteria an effector-triggered immunity-like phenotype (ETI-like, cell death with severe chlorosis) is seen, 3'cADPR levels rise while NAD(+) levels remain constant. Plant immune responses are suppressed. Triggers hypersensitive response-like cell death in Nicotiana tabacum cv. Xanthi and N.benthamiana when transiently expressed, depletes NAD(+) in N.benthamiana. Causes cell death upon induction in yeast due to NAD(+) depletion and/or 3'cADPR itself. Transgenic A.thaliana expressing HopAM1 suppresses its plant immune system upon challenge; the plants produce 3'cADPR without significantly depleting NAD(+). The sequence is that of 3' cyclic ADP-D-ribose synthase HopAM1 from Pseudomonas syringae pv. tomato (strain ATCC BAA-871 / DC3000).